The primary structure comprises 332 residues: DNA-directed RNA polymerase subunit alpha (332 aa).

Residues 2–234 (TVTANQVLRP…DQLSVFGDFT (233 aa)) are alpha N-terminal domain (alpha-NTD). The alpha C-terminal domain (alpha-CTD) stretch occupies residues 248-332 (VDPVLLRPID…AGVAQHGMLG (85 aa)).

This sequence belongs to the RNA polymerase alpha chain family. In terms of assembly, homodimer. The RNAP catalytic core consists of 2 alpha, 1 beta, 1 beta' and 1 omega subunit. When a sigma factor is associated with the core the holoenzyme is formed, which can initiate transcription.

The enzyme catalyses RNA(n) + a ribonucleoside 5'-triphosphate = RNA(n+1) + diphosphate. In terms of biological role, DNA-dependent RNA polymerase catalyzes the transcription of DNA into RNA using the four ribonucleoside triphosphates as substrates. The sequence is that of DNA-directed RNA polymerase subunit alpha from Xanthomonas axonopodis pv. citri (strain 306).